Consider the following 288-residue polypeptide: Light-independent protochlorophyllide reductase iron-sulfur ATP-binding protein (288 aa).

ATP contacts are provided by residues 10-15 (GIGKST) and Lys39. Ser14 contacts Mg(2+). [4Fe-4S] cluster-binding residues include Cys95 and Cys129. 180–181 (NR) provides a ligand contact to ATP.

This sequence belongs to the NifH/BchL/ChlL family. As to quaternary structure, homodimer. Protochlorophyllide reductase is composed of three subunits; ChlL, ChlN and ChlB. [4Fe-4S] cluster is required as a cofactor.

The protein resides in the plastid. It localises to the chloroplast. The enzyme catalyses chlorophyllide a + oxidized 2[4Fe-4S]-[ferredoxin] + 2 ADP + 2 phosphate = protochlorophyllide a + reduced 2[4Fe-4S]-[ferredoxin] + 2 ATP + 2 H2O. It participates in porphyrin-containing compound metabolism; chlorophyll biosynthesis (light-independent). Its function is as follows. Component of the dark-operative protochlorophyllide reductase (DPOR) that uses Mg-ATP and reduced ferredoxin to reduce ring D of protochlorophyllide (Pchlide) to form chlorophyllide a (Chlide). This reaction is light-independent. The L component serves as a unique electron donor to the NB-component of the complex, and binds Mg-ATP. This Chara vulgaris (Common stonewort) protein is Light-independent protochlorophyllide reductase iron-sulfur ATP-binding protein.